Here is a 429-residue protein sequence, read N- to C-terminus: UDP-N-acetylglucosamine 1-carboxyvinyltransferase (429 aa).

Residue 22-23 (KN) coordinates phosphoenolpyruvate. R102 is a UDP-N-acetyl-alpha-D-glucosamine binding site. Catalysis depends on C126, which acts as the Proton donor. C126 is subject to 2-(S-cysteinyl)pyruvic acid O-phosphothioketal. UDP-N-acetyl-alpha-D-glucosamine is bound by residues 131-135 (RPVDL), D316, and I338.

Belongs to the EPSP synthase family. MurA subfamily.

Its subcellular location is the cytoplasm. The catalysed reaction is phosphoenolpyruvate + UDP-N-acetyl-alpha-D-glucosamine = UDP-N-acetyl-3-O-(1-carboxyvinyl)-alpha-D-glucosamine + phosphate. It functions in the pathway cell wall biogenesis; peptidoglycan biosynthesis. Cell wall formation. Adds enolpyruvyl to UDP-N-acetylglucosamine. This Rhodopseudomonas palustris (strain BisB5) protein is UDP-N-acetylglucosamine 1-carboxyvinyltransferase.